The following is a 608-amino-acid chain: Ceramide kinase (608 aa).

Residues glutamate 160–lysine 367 form the DAGKc domain. Residues histidine 170–glycine 174, threonine 201, and glycine 230–glutamate 236 each bind ATP. Substrate is bound at residue glycine 229–glycine 232. Aspartate 231 (proton donor/acceptor) is an active-site residue. Residues proline 254–aspartate 280 form a disordered region. Over residues serine 255–valine 269 the composition is skewed to polar residues. Position 329 (serine 329) interacts with ATP.

Requires Ca(2+) as cofactor.

It carries out the reaction an N-acylsphing-4-enine + ATP = an N-acylsphing-4-enine 1-phosphate + ADP + H(+). Catalyzes specifically the phosphorylation of ceramide to form ceramide 1-phosphate. Possesses high activity on ceramide analogs (C6, C8 synthetic ceramides) and lower activity on C6 and C8 dihydroceramides. Has weak activity on natural ceramides (a mixture of ceramides from bovine brain) and the synthetic substrate C2 ceramide. Has very poor activity on diacylglycerol and sphingosine. Ceramide is a critical sphingolipid metabolite that induces programmed cell death (PCD) in plants and ceramide-1-phosphate has a PCD suppressive effect. Thus, ceramide phosphorylation plays a role in the modulation of PCD and CERK activity is crucial for the maintenance of cell viability. The sequence is that of Ceramide kinase (CERK) from Arabidopsis thaliana (Mouse-ear cress).